The sequence spans 66 residues: UPF0370 protein YpfN (66 aa).

The chain crosses the membrane as a helical span at residues 4 to 24 (LAKYWWILVLVFLVGVLLNVI). A disordered region spans residues 39–66 (KPELPPHRDFNDKWDDEDDWPKKDQPKK). The span at 42 to 51 (LPPHRDFNDK) shows a compositional bias: basic and acidic residues.

It belongs to the UPF0370 family.

It is found in the cell membrane. The sequence is that of UPF0370 protein YpfN from Salmonella paratyphi C (strain RKS4594).